A 350-amino-acid chain; its full sequence is MAARLCARCLPPAWLCRQAGQGQSRHYRAAVCTELKQPLTIQEVAPRPIGPQEVRVDVHFCGINFADNLVCRGQYQEKPPLPFTPGMEFSGVVLEAGADVSTVKKGDRVIGVSNFHSMAEQCITDQKTLWRIPENVSLQDAAVLPVSYGTAILAVDHRARIQPGETVLVTAAAGATGLAVIDVATNVFCAKVIAAAGSDEKCKLAMQRGAQSGVNYSQGSLKDAVKKLVGSSGVNVAIDMVGGDVFLDSLRSLAWEGRIVVLGFAGGNIASVPSNLLLLKNISAMGLYWGRYQHQDFAVFSKSMSTALQYCQQGLIHPHTGAVFKLEKVNDAFLHVMQRKSTGKVLLSLK.

K36 carries the N6-acetyllysine modification. Position 201 is an N6-succinyllysine (K201). Residues K302 and K328 each carry the N6-acetyllysine modification.

This sequence belongs to the zinc-containing alcohol dehydrogenase family. Quinone oxidoreductase subfamily.

The protein is Quinone oxidoreductase-like protein 2 of Rattus norvegicus (Rat).